The sequence spans 257 residues: Putative B3 domain-containing protein At2g27410 (257 aa).

Positions 5–50 are disordered; the sequence is ARTTKINHFRGTSTTQNPNRGLEPSPSSYVTRRSKEKRPINVEKRS. A compositionally biased stretch (polar residues) spans 8-35; that stretch reads TKINHFRGTSTTQNPNRGLEPSPSSYVT. A DNA-binding region (TF-B3) is located at residues 115-209; sequence TPDFLTEDET…KLCFALTPKN (95 aa). The tract at residues 212–257 is disordered; the sequence is RGNSLPGGDGASTSGESGQVPLPIPPARYSSNSGQGCSGESSSSSS. The segment covering 241–257 has biased composition (low complexity); sequence SSNSGQGCSGESSSSSS.

It localises to the nucleus. The chain is Putative B3 domain-containing protein At2g27410 from Arabidopsis thaliana (Mouse-ear cress).